We begin with the raw amino-acid sequence, 697 residues long: tRNA 5-methylaminomethyl-2-thiouridine biosynthesis bifunctional protein MnmC (697 aa).

Positions 1-275 (MTAKPHKSCQ…KPATLAAIDH (275 aa)) are tRNA (mnm(5)s(2)U34)-methyltransferase. Residues 280-697 (VGGGLASANL…LRKLLKGKAL (418 aa)) are FAD-dependent cmnm(5)s(2)U34 oxidoreductase.

It in the N-terminal section; belongs to the methyltransferase superfamily. tRNA (mnm(5)s(2)U34)-methyltransferase family. In the C-terminal section; belongs to the DAO family. FAD serves as cofactor.

Its subcellular location is the cytoplasm. It carries out the reaction 5-aminomethyl-2-thiouridine(34) in tRNA + S-adenosyl-L-methionine = 5-methylaminomethyl-2-thiouridine(34) in tRNA + S-adenosyl-L-homocysteine + H(+). Catalyzes the last two steps in the biosynthesis of 5-methylaminomethyl-2-thiouridine (mnm(5)s(2)U) at the wobble position (U34) in tRNA. Catalyzes the FAD-dependent demodification of cmnm(5)s(2)U34 to nm(5)s(2)U34, followed by the transfer of a methyl group from S-adenosyl-L-methionine to nm(5)s(2)U34, to form mnm(5)s(2)U34. This is tRNA 5-methylaminomethyl-2-thiouridine biosynthesis bifunctional protein MnmC from Shewanella sp. (strain ANA-3).